Consider the following 550-residue polypeptide: Major fimbrium tip subunit FimE (550 aa).

The first 21 residues, 1–21 (MKSKSIIAQLLYVLIAFMAVS), serve as a signal peptide directing secretion. Cys22 carries N-palmitoyl cysteine lipidation. Cys22 is lipidated: S-diacylglycerol cysteine. A propeptide spanning residues 22–51 (CVADKSEPCPSGEPTRVSGSIVSLEHHGLR) is cleaved from the precursor.

This sequence belongs to the FimE family. As to quaternary structure, fimbriae are composed of a major, structural subunit and the minor components FimC, FimD and FimE. Identified in a complex composed of FimC, FimD and FimE (in vitro). Does not directly interact with host proteins, but only as a complex with FimC and FimD.

Its subcellular location is the fimbrium. The protein localises to the cell outer membrane. Functionally, probably a component of the fimbrium tip; required for incorporation of FimC and FimD into fimbriae. These long, filamentous pili are attached to the cell surface; they mediate biofilm formation, adhesion onto host cells and onto other bacteria that are part of the oral microbiome. They play an important role in invasion of periodontal tissues and are major virulence factors. FimC, FimD and FimE contribute to interaction with host CXCR4 and thereby down-regulate the TLR2-mediated host immune response. The polypeptide is Major fimbrium tip subunit FimE (Porphyromonas gingivalis (strain ATCC 33277 / DSM 20709 / CIP 103683 / JCM 12257 / NCTC 11834 / 2561)).